The sequence spans 540 residues: Chaperonin GroEL (540 aa).

ATP contacts are provided by residues 30–33 (TLGP), lysine 51, 87–91 (DGTTT), glycine 415, and aspartate 495.

Belongs to the chaperonin (HSP60) family. In terms of assembly, forms a cylinder of 14 subunits composed of two heptameric rings stacked back-to-back. Interacts with the co-chaperonin GroES.

Its subcellular location is the cytoplasm. The enzyme catalyses ATP + H2O + a folded polypeptide = ADP + phosphate + an unfolded polypeptide.. Together with its co-chaperonin GroES, plays an essential role in assisting protein folding. The GroEL-GroES system forms a nano-cage that allows encapsulation of the non-native substrate proteins and provides a physical environment optimized to promote and accelerate protein folding. This is Chaperonin GroEL from Serratia marcescens.